A 224-amino-acid chain; its full sequence is Abasic site processing protein YoqW (224 aa).

The Nucleophile role is filled by C2. C2 carries the post-translational modification Thiazolidine linkage to a ring-opened DNA abasic site. The active site involves E106.

The protein belongs to the SOS response-associated peptidase family.

With respect to regulation, formation and reversal of DNA-protein cross-link depends on DNA context. Catalyzes formation of the thiazolidine linkage in presence of abasic sites in single-stranded DNA. Mediates the reversal of the thiazolidine cross-link in presence of double stranded DNA. Its function is as follows. Sensor of abasic sites in single-stranded DNA (ssDNA) required to preserve genome integrity by promoting error-free repair of abasic sites. Recognizes and binds abasic sites in ssDNA at replication forks and chemically modifies the lesion by forming a covalent cross-link with DNA: forms a stable thiazolidine linkage between a ring-opened abasic site and the alpha-amino and sulfhydryl substituents of its N-terminal catalytic cysteine residue. The DNA-protein cross-link is then reversed: able to catalyze the reversal of the thiazolidine cross-link and cycle between a cross-link and a non-cross-linked state depending on DNA context: mediates self-reversal of the thiazolidine cross-link in double stranded DNA. May act as a protease: mediates autocatalytic processing of its N-terminal methionine in order to expose the catalytic cysteine. This is Abasic site processing protein YoqW (yoqW) from Bacillus subtilis (strain 168).